Consider the following 645-residue polypeptide: ATP-dependent zinc metalloprotease FtsH (645 aa).

The Cytoplasmic segment spans residues 1-8 (MDFNREHK). Residues 9-29 (INFLYVLAAMVGVLLIQSLVS) form a helical membrane-spanning segment. Over 30–105 (QPDHIRTIPY…FSGEPEPGPW (76 aa)) the chain is Periplasmic. The helical transmembrane segment at 106 to 126 (PTILGWLMPIVGFALVWMFLI) threads the bilayer. Topologically, residues 127-645 (RPMSMGPGMD…ALTVEGGEAQ (519 aa)) are cytoplasmic. 199 to 206 (GPPGTGKT) serves as a coordination point for ATP. His423 is a Zn(2+) binding site. Glu424 is a catalytic residue. Zn(2+) contacts are provided by His427 and Asp500. The disordered stretch occupies residues 612–645 (SASVLRDGGDGAADAGQDRSGEHRALTVEGGEAQ). Residues 627–637 (GQDRSGEHRAL) are compositionally biased toward basic and acidic residues.

This sequence in the central section; belongs to the AAA ATPase family. In the C-terminal section; belongs to the peptidase M41 family. In terms of assembly, homohexamer. Zn(2+) is required as a cofactor.

Its subcellular location is the cell inner membrane. In terms of biological role, acts as a processive, ATP-dependent zinc metallopeptidase for both cytoplasmic and membrane proteins. Plays a role in the quality control of integral membrane proteins. The chain is ATP-dependent zinc metalloprotease FtsH from Paraburkholderia phymatum (strain DSM 17167 / CIP 108236 / LMG 21445 / STM815) (Burkholderia phymatum).